The following is a 270-amino-acid chain: Phosphonates import ATP-binding protein PhnC (270 aa).

In terms of domain architecture, ABC transporter spans 2–245 (LVIEGLTCRF…IARELYDLEA (244 aa)). Position 34 to 41 (34 to 41 (GRSGAGKS)) interacts with ATP.

Belongs to the ABC transporter superfamily. Phosphonates importer (TC 3.A.1.9.1) family. As to quaternary structure, the complex is composed of two ATP-binding proteins (PhnC), two transmembrane proteins (PhnE) and a solute-binding protein (PhnD).

It localises to the cell inner membrane. The enzyme catalyses phosphonate(out) + ATP + H2O = phosphonate(in) + ADP + phosphate + H(+). In terms of biological role, part of the ABC transporter complex PhnCDE involved in phosphonates import. Responsible for energy coupling to the transport system. In Rhodopseudomonas palustris (strain BisB5), this protein is Phosphonates import ATP-binding protein PhnC.